Here is a 308-residue protein sequence, read N- to C-terminus: Glutaminase (308 aa).

Residues serine 66, asparagine 117, glutamate 161, asparagine 168, tyrosine 192, tyrosine 244, and valine 262 each contribute to the substrate site.

It belongs to the glutaminase family. In terms of assembly, homotetramer.

It carries out the reaction L-glutamine + H2O = L-glutamate + NH4(+). The chain is Glutaminase from Enterobacter sp. (strain 638).